Consider the following 188-residue polypeptide: MDADLDTLLADLQRRMDGAMETLKREFSGLRTGRANPALLDPVKVEAYGTLMPLNQVATVAVPESRMLTVQVWDRGMVNATVAAIRDCGLGLNPQPDGQLIRVPLPLLTEERRNELARAAGKYAEGARVAVRGVRRDGMETIKGFEKKHQIGEDQGRDWADRVQKLTDATIKKIDELLVEKEKDIRQV.

Belongs to the RRF family.

The protein resides in the cytoplasm. In terms of biological role, responsible for the release of ribosomes from messenger RNA at the termination of protein biosynthesis. May increase the efficiency of translation by recycling ribosomes from one round of translation to another. The protein is Ribosome-recycling factor of Acidiphilium cryptum (strain JF-5).